The following is a 91-amino-acid chain: UPF0250 protein mma_3250 (91 aa).

It belongs to the UPF0250 family.

The chain is UPF0250 protein mma_3250 from Janthinobacterium sp. (strain Marseille) (Minibacterium massiliensis).